The following is a 944-amino-acid chain: Protein unc-45 homolog A (944 aa).

Residues 1 to 25 (MTVSGPETPEPRPSDPGASSAEQLR) are disordered. 3 TPR repeats span residues 21-54 (AEQL…GATP), 58-91 (AILH…DGGD), and 92-125 (VKAL…EPKN). Residue K70 is modified to N6-acetyllysine. N6-acetyllysine is present on K483.

Interacts with PGR isoforms A and B as well as with NR3C1 in the absence of ligand, and with HSP90AB1. Binding to HSP90AB1 involves 2 UNC45A monomers per HSP90AB1 dimer. Detected in spleen, bone marrow, lung and ovary, and at lower levels in testis, kidney, heart and brain (at protein level). Ubiquitous. Detected in uterus, large intestine, kidney, spleen, lung, brain, liver and ovary.

The protein resides in the cytoplasm. Its subcellular location is the perinuclear region. It localises to the nucleus. Its function is as follows. May act as co-chaperone for HSP90 (Potential). Prevents the stimulation of HSP90AB1 ATPase activity by AHSA1. Positive factor in promoting PGR function in the cell. May be necessary for proper folding of myosin (Potential). Necessary for normal cell proliferation. Necessary for normal myotube formation and myosin accumulation during muscle cell development. May play a role in erythropoiesis in stroma cells in the spleen. This is Protein unc-45 homolog A (Unc45a) from Mus musculus (Mouse).